Consider the following 406-residue polypeptide: Tyrosine-protein phosphatase non-receptor type 2 (406 aa).

The 271-residue stretch at Ile5 to Gly275 folds into the Tyrosine-protein phosphatase domain. A Phosphotyrosine modification is found at Tyr22. Position 52 is a phosphoserine (Ser52). Tyr68 bears the Phosphotyrosine mark. Substrate contacts are provided by residues Asp182, Cys216–Arg222, and Gln260. The active-site Phosphocysteine intermediate is Cys216. At Cys216 the chain carries S-nitrosocysteine. A phosphoserine mark is found at Ser293, Ser298, Ser304, Ser320, and Ser339. Positions Glu341–His406 are endoplasmic reticulum location. A mediates interaction with STX17 region spans residues Glu371–His406.

It belongs to the protein-tyrosine phosphatase family. Non-receptor class 1 subfamily. As to quaternary structure, interacts with RMDN3. Isoform 1 interacts with TMED9. Isoform 1 interacts with STX17; dephosphorylates STX17. Interacts with ITGA1 (via cytoplasmic domain); activates the phosphatase activity towards EGFR. Interacts with TRAF2; probably involved in tumor necrosis factor-mediated signaling. Interacts with MET. Interacts with FAM220A and STAT3; interaction with FAM220A promotes interaction of PTPN2 with transcriptional activator STAT3, leading to dephosphorylation of STAT3 by PTPN2 and negative regulation of STAT3 transcriptional activator activity. In terms of processing, specifically phosphorylated in a cell cycle-dependent manner by cyclin-dependent kinases CDK1 and CDK2. Probably activated through phosphorylation by PKR. As to expression, ubiquitously expressed. The highest expression levels were found in ovary, testis, thymus and kidney.

Its subcellular location is the endoplasmic reticulum. The protein localises to the endoplasmic reticulum-Golgi intermediate compartment. The protein resides in the nucleus. It is found in the cytoplasm. It localises to the cell membrane. It carries out the reaction O-phospho-L-tyrosyl-[protein] + H2O = L-tyrosyl-[protein] + phosphate. Non-receptor type tyrosine-specific phosphatase that dephosphorylates receptor protein tyrosine kinases including INSR, EGFR, CSF1R, PDGFR. Also dephosphorylates non-receptor protein tyrosine kinases like JAK1, JAK2, JAK3, Src family kinases, STAT1, STAT3 and STAT6 either in the nucleus or the cytoplasm. Negatively regulates numerous signaling pathways and biological processes like hematopoiesis, inflammatory response, cell proliferation and differentiation, and glucose homeostasis. Plays a multifaceted and important role in the development of the immune system. Functions in T-cell receptor signaling through dephosphorylation of FYN and LCK to control T-cells differentiation and activation. Dephosphorylates CSF1R, negatively regulating its downstream signaling and macrophage differentiation. Negatively regulates cytokine (IL2/interleukin-2 and interferon)-mediated signaling through dephosphorylation of the cytoplasmic kinases JAK1, JAK3 and their substrate STAT1, that propagate signaling downstream of the cytokine receptors. Also regulates the IL6/interleukin-6 and IL4/interleukin-4 cytokine signaling through dephosphorylation of STAT3 and STAT6 respectively. In addition to the immune system, it is involved in anchorage-dependent, negative regulation of EGF-stimulated cell growth. Activated by the integrin ITGA1/ITGB1, it dephosphorylates EGFR and negatively regulates EGF signaling. Dephosphorylates PDGFRB and negatively regulates platelet-derived growth factor receptor-beta signaling pathway and therefore cell proliferation. Negatively regulates tumor necrosis factor-mediated signaling downstream via MAPK through SRC dephosphorylation. May also regulate the hepatocyte growth factor receptor signaling pathway through dephosphorylation of the hepatocyte growth factor receptor MET. Also plays an important role in glucose homeostasis. For instance, negatively regulates the insulin receptor signaling pathway through the dephosphorylation of INSR and control gluconeogenesis and liver glucose production through negative regulation of the IL6 signaling pathways. May also bind DNA. The protein is Tyrosine-protein phosphatase non-receptor type 2 (Ptpn2) of Mus musculus (Mouse).